A 428-amino-acid polypeptide reads, in one-letter code: Histidine--tRNA ligase (428 aa).

It belongs to the class-II aminoacyl-tRNA synthetase family. Homodimer.

It localises to the cytoplasm. It carries out the reaction tRNA(His) + L-histidine + ATP = L-histidyl-tRNA(His) + AMP + diphosphate + H(+). This is Histidine--tRNA ligase from Lactobacillus helveticus (strain DPC 4571).